A 156-amino-acid chain; its full sequence is Small ribosomal subunit protein uS7 (156 aa).

Belongs to the universal ribosomal protein uS7 family. As to quaternary structure, part of the 30S ribosomal subunit. Contacts proteins S9 and S11.

One of the primary rRNA binding proteins, it binds directly to 16S rRNA where it nucleates assembly of the head domain of the 30S subunit. Is located at the subunit interface close to the decoding center, probably blocks exit of the E-site tRNA. This chain is Small ribosomal subunit protein uS7, found in Methylorubrum populi (strain ATCC BAA-705 / NCIMB 13946 / BJ001) (Methylobacterium populi).